The primary structure comprises 438 residues: Protein c-ets-1-A (438 aa).

The PNT domain occupies 49–134 (ATFSRFTKEQ…EHLEILQKDS (86 aa)). The segment at 128–240 (EILQKDSKQY…DNMCLGRISR (113 aa)) is activation domain; required for transcription activation. The helix HI-1 stretch occupies residues 301–309 (FKDYVRDRA). The segment at 320-327 (AAALAGYT) is helix HI-2. The ETS DNA-binding region spans 332-412 (IQLWQFLLEL…AGKRYVYRFV (81 aa)). The helix H4 stretch occupies residues 415 to 419 (LQSLL). The interval 423–429 (PEELHAM) is helix H5.

Belongs to the ETS family. Binds DNA as a homodimer; homodimerization is required for transcription activation.

The protein resides in the nucleus. Its subcellular location is the cytoplasm. With respect to regulation, autoinhibited by a module composed of four alpha helices (HI-1, HI-2, H4, and H5) that flank the DNA-binding ETS domain, reducing the affinity for DNA. Functionally, transcription factor. Directly controls the expression of cytokine and chemokine genes in a wide variety of different cellular contexts. This chain is Protein c-ets-1-A (ets1-a), found in Xenopus laevis (African clawed frog).